The sequence spans 344 residues: UDP-3-O-acylglucosamine N-acyltransferase (344 aa).

The active-site Proton acceptor is the His-248.

This sequence belongs to the transferase hexapeptide repeat family. LpxD subfamily. As to quaternary structure, homotrimer.

It catalyses the reaction a UDP-3-O-[(3R)-3-hydroxyacyl]-alpha-D-glucosamine + a (3R)-hydroxyacyl-[ACP] = a UDP-2-N,3-O-bis[(3R)-3-hydroxyacyl]-alpha-D-glucosamine + holo-[ACP] + H(+). It participates in bacterial outer membrane biogenesis; LPS lipid A biosynthesis. Its function is as follows. Catalyzes the N-acylation of UDP-3-O-acylglucosamine using 3-hydroxyacyl-ACP as the acyl donor. Is involved in the biosynthesis of lipid A, a phosphorylated glycolipid that anchors the lipopolysaccharide to the outer membrane of the cell. The protein is UDP-3-O-acylglucosamine N-acyltransferase of Prochlorococcus marinus (strain MIT 9312).